The sequence spans 146 residues: D-aminoacyl-tRNA deacylase (146 aa).

The Gly-cisPro motif, important for rejection of L-amino acids signature appears at 137–138 (GP).

The protein belongs to the DTD family. In terms of assembly, homodimer.

It localises to the cytoplasm. The catalysed reaction is glycyl-tRNA(Ala) + H2O = tRNA(Ala) + glycine + H(+). The enzyme catalyses a D-aminoacyl-tRNA + H2O = a tRNA + a D-alpha-amino acid + H(+). An aminoacyl-tRNA editing enzyme that deacylates mischarged D-aminoacyl-tRNAs. Also deacylates mischarged glycyl-tRNA(Ala), protecting cells against glycine mischarging by AlaRS. Acts via tRNA-based rather than protein-based catalysis; rejects L-amino acids rather than detecting D-amino acids in the active site. By recycling D-aminoacyl-tRNA to D-amino acids and free tRNA molecules, this enzyme counteracts the toxicity associated with the formation of D-aminoacyl-tRNA entities in vivo and helps enforce protein L-homochirality. The chain is D-aminoacyl-tRNA deacylase from Acinetobacter baylyi (strain ATCC 33305 / BD413 / ADP1).